The primary structure comprises 127 residues: E3 ubiquitin-protein ligase PPP1R11 (127 aa).

2 disordered regions span residues 1–55 (MAEA…EHMG) and 70–127 (AFGE…PMQH). Ala2 carries the post-translational modification N-acetylalanine. Positions 11–23 (ETVTETTVTVTTE) are enriched in low complexity. A compositionally biased stretch (basic and acidic residues) spans 40–55 (KKVEWSSDTVDNEHMG). Residues 53-63 (HMGRRSSKCCC) are atypical RING finger domain 1. 2 positions are modified to phosphoserine: Ser74 and Ser75. At Thr76 the chain carries Phosphothreonine. At Ser78 the chain carries Phosphoserine. The atypical RING finger domain 2 stretch occupies residues 86–95 (CGHTHCVRGH). A compositionally biased stretch (basic residues) spans 90–100 (HCVRGHRKGRR). The segment covering 103 to 127 (TPGPTPTTPPQPPDPSQPPPGPMQH) has biased composition (pro residues). Thr110 carries the post-translational modification Phosphothreonine.

As to quaternary structure, interacts with TLR2 and UBE2D2. Auto-ubiquitinated.

It catalyses the reaction S-ubiquitinyl-[E2 ubiquitin-conjugating enzyme]-L-cysteine + [acceptor protein]-L-lysine = [E2 ubiquitin-conjugating enzyme]-L-cysteine + N(6)-ubiquitinyl-[acceptor protein]-L-lysine.. The protein operates within protein modification; protein ubiquitination. In terms of biological role, atypical E3 ubiquitin-protein ligase which ubiquitinates TLR2 at 'Lys-754' leading to its degradation by the proteasome. Plays a role in regulating inflammatory cytokine release and gram-positive bacterial clearance by functioning, in part, through the ubiquitination and degradation of TLR2. Inhibitor of protein phosphatase 1. This is E3 ubiquitin-protein ligase PPP1R11 (Ppp1r11) from Rattus norvegicus (Rat).